The following is a 367-amino-acid chain: Protein SGT1 homolog (367 aa).

TPR repeat units lie at residues 6–39, 40–73, and 75–107; these read ASDLESKAKAAFVDDDFELAAELYTQAIEASPAT, AELYADRAQAHIKLGNYTEAVADANKAIELDPSM, and KAYLRKGAACIRLEEYQTAKAALELGYSFASGD. The CS domain maps to 165 to 254; sequence KPKYRHDFYN…AEQITWTSLD (90 aa). 2 disordered regions span residues 261-289 and 347-367; these read AVPQKIIPPAESAQRPSYPSSKSKKDWDK and VGSKKVEGSPPDGMELKKWEY. The SGS domain occupies 277-367; that stretch reads SYPSSKSKKD…DGMELKKWEY (91 aa).

The protein belongs to the SGT1 family. In terms of assembly, interacts (via CS domain) with RAR1 (via CHORD 2 domain). Interacts with RAD6. As to expression, expressed in roots, root tips, shoot apical meristem (SAM), young leaves, flag leaves and ears.

The protein localises to the cytoplasm. The protein resides in the nucleus. Involved in basal disease resistance to bacterial blight (X.oryzae). May act as positive regulator of basal defense. Probably required for SCF-mediated ubiquitination, by coupling HSP90 to SCF complex for ubiquitination of HSP90 client proteins. The protein is Protein SGT1 homolog of Oryza sativa subsp. japonica (Rice).